The sequence spans 368 residues: Agmatine deiminase (368 aa).

Residue Cys357 is the Amidino-cysteine intermediate of the active site.

This sequence belongs to the agmatine deiminase family. Homodimer.

The catalysed reaction is agmatine + H2O = N-carbamoylputrescine + NH4(+). It functions in the pathway amine and polyamine biosynthesis; putrescine biosynthesis via agmatine pathway; N-carbamoylputrescine from agmatine: step 1/1. Its function is as follows. Mediates the hydrolysis of agmatine into N-carbamoylputrescine in the arginine decarboxylase (ADC) pathway of putrescine biosynthesis, a basic polyamine. The sequence is that of Agmatine deiminase from Pseudomonas putida (strain ATCC 47054 / DSM 6125 / CFBP 8728 / NCIMB 11950 / KT2440).